A 451-amino-acid chain; its full sequence is UDP-N-acetylmuramate--L-alanine ligase (451 aa).

An ATP-binding site is contributed by 110–116 (GTHGKTT).

This sequence belongs to the MurCDEF family.

It is found in the cytoplasm. It catalyses the reaction UDP-N-acetyl-alpha-D-muramate + L-alanine + ATP = UDP-N-acetyl-alpha-D-muramoyl-L-alanine + ADP + phosphate + H(+). The protein operates within cell wall biogenesis; peptidoglycan biosynthesis. In terms of biological role, cell wall formation. This chain is UDP-N-acetylmuramate--L-alanine ligase, found in Francisella tularensis subsp. holarctica (strain FTNF002-00 / FTA).